We begin with the raw amino-acid sequence, 1048 residues long: 3-hydroxy-3-methylglutaryl-coenzyme A reductase (1048 aa).

The Cytoplasmic portion of the chain corresponds to methionine 1–proline 32. Residues isoleucine 33–glycine 53 traverse the membrane as a helical segment. The Lumenal segment spans residues threonine 54–threonine 220. Residues valine 221–phenylalanine 241 form a helical membrane-spanning segment. In terms of domain architecture, SSD spans aspartate 222–valine 403. Residues arginine 242–arginine 250 lie on the Cytoplasmic side of the membrane. The helical transmembrane segment at phenylalanine 251–isoleucine 271 threads the bilayer. The Lumenal portion of the chain corresponds to threonine 272–aspartate 276. Residues valine 277 to phenylalanine 297 form a helical membrane-spanning segment. Over glutamate 298 to glutamate 348 the chain is Cytoplasmic. The helical transmembrane segment at glycine 349–leucine 369 threads the bilayer. The Lumenal portion of the chain corresponds to arginine 370 to histidine 377. Residues phenylalanine 378 to alanine 398 traverse the membrane as a helical segment. The Cytoplasmic portion of the chain corresponds to threonine 399–tryptophan 439. A helical transmembrane segment spans residues tryptophan 440 to phenylalanine 460. At tyrosine 461–arginine 542 the chain is on the lumenal side. Asparagine 470 and asparagine 520 each carry an N-linked (GlcNAc...) asparagine glycan. A helical transmembrane segment spans residues leucine 543–alanine 563. Topologically, residues arginine 564 to lysine 1048 are cytoplasmic. Glutamate 729 (charge relay system) is an active-site residue. Serine 735–lysine 741 is a CoA binding site. Residues serine 796 to phenylalanine 798 and aspartate 823 to serine 831 each bind NADP(+). Lysine 863 functions as the Charge relay system in the catalytic mechanism. Position 892 to 894 (valine 892 to lysine 894) interacts with CoA. Aspartate 939 serves as the catalytic Charge relay system. A CoA-binding site is contributed by alanine 1034 to histidine 1035. The Proton donor role is filled by histidine 1035. Residue asparagine 1039–arginine 1040 participates in NADP(+) binding.

It belongs to the HMG-CoA reductase family.

The protein localises to the endoplasmic reticulum membrane. The enzyme catalyses (R)-mevalonate + 2 NADP(+) + CoA = (3S)-3-hydroxy-3-methylglutaryl-CoA + 2 NADPH + 2 H(+). The protein operates within metabolic intermediate biosynthesis; (R)-mevalonate biosynthesis; (R)-mevalonate from acetyl-CoA: step 3/3. Functionally, HMG-CoA reductase; part of the first module of ergosterol biosynthesis pathway that includes the early steps of the pathway, conserved across all eukaryotes, and which results in the formation of mevalonate from acetyl-coenzyme A (acetyl-CoA). In this module, the cytosolic acetyl-CoA acetyltransferase catalyzes the formation of acetoacetyl-CoA. The hydroxymethylglutaryl-CoA synthase then condenses acetyl-CoA with acetoacetyl-CoA to form HMG-CoA. The rate-limiting step of the early module is the reduction to mevalonate by the 3-hydroxy-3-methylglutaryl-coenzyme A (HMG-CoA) reductase. The sequence is that of 3-hydroxy-3-methylglutaryl-coenzyme A reductase from Aspergillus terreus.